A 949-amino-acid polypeptide reads, in one-letter code: Phosphocholine transferase AnkX (949 aa).

Positions 155 to 289 constitute a Fido domain; the sequence is LNPEQIPDLA…IFNTVEIIEQ (135 aa). ANK repeat units lie at residues 391–420, 424–453, 464–494, 498–527, 554–583, 588–617, 658–687, 691–720, 725–767, and 771–800; these read VGKTPAHLAVISGNMAMLDELIAKKADLSL, DGKTALHYAAECGNMQIMGKILKVVLSQED, HGKTAFHYAAEFGTPELISALTTTEVIQINE, SGSSAITLAYKNHKLKIFDELLNSGADISD, LNKEAFRIAISLGSVSLVKKFLRAGVDIDI, DKATPLMLSINSGNPKLVSYLLKKGANTRL, NGNPPLYNAVVVNDLKMATILLEMGARVDF, LGNNILHSAMRRCDLPIILDIVKKDSTLLH, ERRN…DLNK, and KGKTILDIALSKQYFHLCVKLMKAGAHTNI.

The protein resides in the secreted. Its subcellular location is the host cytoplasm. The enzyme catalyses [Rab1 protein]-L-serine + CDP-choline = [Rab1 protein]-O-phosphocholine-L-serine + CMP + H(+). Its function is as follows. Virulence effector that plays a role in hijacking the host vesicular trafficking by recruiting the small guanosine triphosphatase (GTPase) Rab1 to the cytosolic face of the Legionella-containing vacuole (LCVs). Acts as a phosphocholine transferase by mediating the addition of phosphocholine to Ser residues of host RAB1 (RAB1A, RAB1B or RAB1C) and RAB35, leading to displacement of GDP dissociation inhibitors (GDI). Phosphocholination of target proteins also impairs accessibility to GTPase effector LepB. Can act on both GDP-bound and GTP-bound Rab proteins. In Legionella pneumophila subsp. pneumophila (strain Philadelphia 1 / ATCC 33152 / DSM 7513), this protein is Phosphocholine transferase AnkX (ankX).